We begin with the raw amino-acid sequence, 456 residues long: Bifunctional protein GlmU (456 aa).

The segment at 1 to 229 is pyrophosphorylase; sequence MLNNAMSVVI…LSEVEGVNNR (229 aa). UDP-N-acetyl-alpha-D-glucosamine is bound by residues 11-14, Lys-25, Gln-76, 81-82, 103-105, Gly-140, Glu-154, Asn-169, and Asn-227; these read LAAG, GT, and YGD. Residue Asp-105 participates in Mg(2+) binding. Asn-227 contacts Mg(2+). The tract at residues 230-250 is linker; that stretch reads LQLSRLERVYQSEQAEKLLLA. The segment at 251–456 is N-acetyltransferase; the sequence is GVMLRDPARF…EGWRRPVKKK (206 aa). 2 residues coordinate UDP-N-acetyl-alpha-D-glucosamine: Arg-333 and Lys-351. The Proton acceptor role is filled by His-363. Residues Tyr-366 and Asn-377 each contribute to the UDP-N-acetyl-alpha-D-glucosamine site. Acetyl-CoA contacts are provided by residues Ala-380, 386 to 387, Ser-405, Ala-423, and Arg-440; that span reads NY.

The protein in the N-terminal section; belongs to the N-acetylglucosamine-1-phosphate uridyltransferase family. This sequence in the C-terminal section; belongs to the transferase hexapeptide repeat family. Homotrimer. Mg(2+) is required as a cofactor.

The protein localises to the cytoplasm. The catalysed reaction is alpha-D-glucosamine 1-phosphate + acetyl-CoA = N-acetyl-alpha-D-glucosamine 1-phosphate + CoA + H(+). The enzyme catalyses N-acetyl-alpha-D-glucosamine 1-phosphate + UTP + H(+) = UDP-N-acetyl-alpha-D-glucosamine + diphosphate. It participates in nucleotide-sugar biosynthesis; UDP-N-acetyl-alpha-D-glucosamine biosynthesis; N-acetyl-alpha-D-glucosamine 1-phosphate from alpha-D-glucosamine 6-phosphate (route II): step 2/2. Its pathway is nucleotide-sugar biosynthesis; UDP-N-acetyl-alpha-D-glucosamine biosynthesis; UDP-N-acetyl-alpha-D-glucosamine from N-acetyl-alpha-D-glucosamine 1-phosphate: step 1/1. It functions in the pathway bacterial outer membrane biogenesis; LPS lipid A biosynthesis. Its function is as follows. Catalyzes the last two sequential reactions in the de novo biosynthetic pathway for UDP-N-acetylglucosamine (UDP-GlcNAc). The C-terminal domain catalyzes the transfer of acetyl group from acetyl coenzyme A to glucosamine-1-phosphate (GlcN-1-P) to produce N-acetylglucosamine-1-phosphate (GlcNAc-1-P), which is converted into UDP-GlcNAc by the transfer of uridine 5-monophosphate (from uridine 5-triphosphate), a reaction catalyzed by the N-terminal domain. The polypeptide is Bifunctional protein GlmU (Escherichia fergusonii (strain ATCC 35469 / DSM 13698 / CCUG 18766 / IAM 14443 / JCM 21226 / LMG 7866 / NBRC 102419 / NCTC 12128 / CDC 0568-73)).